We begin with the raw amino-acid sequence, 141 residues long: Putative pre-16S rRNA nuclease (141 aa).

Belongs to the YqgF nuclease family.

The protein resides in the cytoplasm. In terms of biological role, could be a nuclease involved in processing of the 5'-end of pre-16S rRNA. The sequence is that of Putative pre-16S rRNA nuclease from Syntrophomonas wolfei subsp. wolfei (strain DSM 2245B / Goettingen).